Here is a 373-residue protein sequence, read N- to C-terminus: Erythronate-4-phosphate dehydrogenase (373 aa).

Substrate-binding residues include serine 45 and threonine 67. Residues aspartate 147, alanine 207–arginine 209, and aspartate 233 each bind NAD(+). Arginine 209 is a catalytic residue. The active site involves glutamate 238. Histidine 255 serves as the catalytic Proton donor. An NAD(+)-binding site is contributed by glycine 258.

It belongs to the D-isomer specific 2-hydroxyacid dehydrogenase family. PdxB subfamily. Homodimer.

Its subcellular location is the cytoplasm. The catalysed reaction is 4-phospho-D-erythronate + NAD(+) = (R)-3-hydroxy-2-oxo-4-phosphooxybutanoate + NADH + H(+). It functions in the pathway cofactor biosynthesis; pyridoxine 5'-phosphate biosynthesis; pyridoxine 5'-phosphate from D-erythrose 4-phosphate: step 2/5. Catalyzes the oxidation of erythronate-4-phosphate to 3-hydroxy-2-oxo-4-phosphonooxybutanoate. This Pseudoalteromonas translucida (strain TAC 125) protein is Erythronate-4-phosphate dehydrogenase.